The sequence spans 790 residues: LPS-assembly protein LptD (790 aa).

Residues 1–20 (MRMLRWLILSAFSVAGAVQA) form the signal peptide.

The protein belongs to the LptD family. As to quaternary structure, component of the lipopolysaccharide transport and assembly complex. Interacts with LptE and LptA.

It is found in the cell outer membrane. Its function is as follows. Together with LptE, is involved in the assembly of lipopolysaccharide (LPS) at the surface of the outer membrane. The polypeptide is LPS-assembly protein LptD (Bordetella bronchiseptica (strain ATCC BAA-588 / NCTC 13252 / RB50) (Alcaligenes bronchisepticus)).